The primary structure comprises 118 residues: Beta-elicitin cryptogein (118 aa).

An N-terminal signal peptide occupies residues 1-20 (MNFTALLAAVAAALVGSANA). 3 disulfide bridges follow: Cys23–Cys91, Cys47–Cys76, and Cys71–Cys115.

Belongs to the elicitin family.

It localises to the secreted. Functionally, induces local and distal defense responses (incompatible hypersensitive reaction) in plants from the solanaceae and cruciferae families. Elicits leaf necrosis and causes the accumulation of pathogenesis-related proteins. Might interact with the lipidic molecules of the plasma membrane. In Phytophthora cryptogea, this protein is Beta-elicitin cryptogein.